Reading from the N-terminus, the 572-residue chain is Probable lysosomal cobalamin transporter (572 aa).

A run of 9 helical transmembrane segments spans residues 8–28 (VIWF…SVFI), 40–60 (FVTF…MLLP), 95–115 (IIYY…IPFA), 145–165 (TLTF…APMM), 188–208 (AFTF…AFYT), 314–334 (GGFC…MTVV), 374–394 (IIFA…VVAV), 421–441 (AVLT…LVPG), and 499–519 (VALN…LFLA). Positions 522 to 544 (GRRRGRGRESVSKHQKKRQSYMR) are disordered.

It belongs to the LIMR family. LMBRD1 subfamily.

Its subcellular location is the lysosome membrane. In terms of biological role, probable lysosomal cobalamin transporter. Required to export cobalamin from lysosomes allowing its conversion to cofactors. This Aspergillus fumigatus (strain ATCC MYA-4609 / CBS 101355 / FGSC A1100 / Af293) (Neosartorya fumigata) protein is Probable lysosomal cobalamin transporter.